The chain runs to 244 residues: tRNA pseudouridine synthase A (244 aa).

Catalysis depends on aspartate 52, which acts as the Nucleophile. A substrate-binding site is contributed by tyrosine 110.

This sequence belongs to the tRNA pseudouridine synthase TruA family. As to quaternary structure, homodimer.

The catalysed reaction is uridine(38/39/40) in tRNA = pseudouridine(38/39/40) in tRNA. In terms of biological role, formation of pseudouridine at positions 38, 39 and 40 in the anticodon stem and loop of transfer RNAs. In Geobacter sulfurreducens (strain ATCC 51573 / DSM 12127 / PCA), this protein is tRNA pseudouridine synthase A.